Consider the following 452-residue polypeptide: Agmatine coumaroyltransferase (452 aa).

Residues His163 and Asp396 each act as proton acceptor in the active site.

Belongs to the plant acyltransferase family.

It catalyses the reaction 4-coumaroyl-CoA + agmatine = N-(4-guanidinobutyl)-4-hydroxycinnamamide + CoA + H(+). Its function is as follows. Involved in the biosynthesis of hydroxycinnamic acid amides, which play a role in defense against pathogens. Agmatine is the preferred acyl acceptor, lower activity is observed towards putrescine. The preferred acyl donor is p-coumaroyl-CoA, lower activity is seen towards feruloyl-CoA. The sequence is that of Agmatine coumaroyltransferase from Arabidopsis thaliana (Mouse-ear cress).